The chain runs to 382 residues: Cytochrome b (382 aa).

Transmembrane regions (helical) follow at residues 33 to 53, 77 to 98, 113 to 133, and 178 to 198; these read FGSL…FLAM, WLVR…YTHI, WTVG…GYVL, and FFAF…IHLL. Residues histidine 83 and histidine 97 each contribute to the heme b site. Heme b is bound by residues histidine 182 and histidine 196. Histidine 201 contacts a ubiquinone. Helical transmembrane passes span 226–246, 288–308, 320–340, and 347–367; these read LKDL…ALLT, LGGV…PFLQ, LTQL…WIGG, and FVSI…IIIP.

Belongs to the cytochrome b family. In terms of assembly, the cytochrome bc1 complex contains 3 respiratory subunits (MT-CYB, CYC1 and UQCRFS1), 2 core proteins (UQCRC1 and UQCRC2) and probably 6 low-molecular weight proteins. Heme b serves as cofactor.

The protein localises to the mitochondrion inner membrane. Its function is as follows. Component of the ubiquinol-cytochrome c reductase complex (complex III or cytochrome b-c1 complex) that is part of the mitochondrial respiratory chain. The b-c1 complex mediates electron transfer from ubiquinol to cytochrome c. Contributes to the generation of a proton gradient across the mitochondrial membrane that is then used for ATP synthesis. In Sigmops gracilis (Slender fangjaw), this protein is Cytochrome b (mt-cyb).